The sequence spans 140 residues: ATP synthase epsilon chain (140 aa).

Belongs to the ATPase epsilon chain family. As to quaternary structure, F-type ATPases have 2 components, CF(1) - the catalytic core - and CF(0) - the membrane proton channel. CF(1) has five subunits: alpha(3), beta(3), gamma(1), delta(1), epsilon(1). CF(0) has three main subunits: a, b and c.

The protein localises to the cell inner membrane. Its function is as follows. Produces ATP from ADP in the presence of a proton gradient across the membrane. This Bordetella bronchiseptica (strain ATCC BAA-588 / NCTC 13252 / RB50) (Alcaligenes bronchisepticus) protein is ATP synthase epsilon chain.